Here is a 412-residue protein sequence, read N- to C-terminus: Adenosine receptor A2a (412 aa).

Over 1–7 the chain is Extracellular; the sequence is MSTMGSW. The helical transmembrane segment at 8 to 32 threads the bilayer; that stretch reads VYITVELAIAVLAILGNVLVCWAVW. The Cytoplasmic segment spans residues 33–42; that stretch reads LNSNLQNVTN. A helical transmembrane segment spans residues 43–66; sequence YFVVSLAAADIAVGVLAIPFAITI. Residues 67–77 lie on the Extracellular side of the membrane; sequence STGFCAACHNC. Cystine bridges form between C71-C159, C74-C146, and C77-C166. The chain crosses the membrane as a helical span at residues 78 to 100; that stretch reads LFFACFVLVLTQSSIFSLLAIAI. Topologically, residues 101 to 120 are cytoplasmic; the sequence is DRYIAIRIPLRYNGLVTGTR. The helical transmembrane segment at 121–143 threads the bilayer; that stretch reads AKGIIAVCWVLSFAIGLTPMLGW. The Extracellular portion of the chain corresponds to 144–173; sequence NNCSQPKEGRNYSQGCGEGQVACLFEDVVP. 2 N-linked (GlcNAc...) asparagine glycosylation sites follow: N145 and N154. E169 serves as a coordination point for adenosine. The helical transmembrane segment at 174–198 threads the bilayer; it reads MNYMVYYNFFAFVLVPLLLMLGVYL. The Cytoplasmic portion of the chain corresponds to 199–234; that stretch reads RIFLAARRQLKQMESQPLPGERARSTLQKEVHAAKS. The chain crosses the membrane as a helical span at residues 235-258; sequence LAIIVGLFALCWLPLHIINCFTFF. N253 lines the adenosine pocket. A disulfide bridge connects residues C259 and C262. The Extracellular portion of the chain corresponds to 259 to 266; the sequence is CPECSHAP. Residues 267 to 290 form a helical membrane-spanning segment; that stretch reads LWLMYLTIVLSHTNSVVNPFIYAY. S277 and H278 together coordinate adenosine. Topologically, residues 291–412 are cytoplasmic; it reads RIREFRQTFR…PLAQDGAGVS (122 aa). The tract at residues 392 to 412 is disordered; sequence GACPESPGLEGPLAQDGAGVS.

This sequence belongs to the G-protein coupled receptor 1 family. As to quaternary structure, interacts (via cytoplasmic C-terminal domain) with USP4; the interaction is direct. May interact with DRD4. Interacts with NECAB2. Interacts (via cytoplasmic C-terminal domain) with GAS2L2; interaction enhances receptor-mediated adenylyl cyclase activity. Ubiquitinated. Deubiquitinated by USP4; leading to stabilization and expression at the cell surface.

Its subcellular location is the cell membrane. Functionally, receptor for adenosine. The activity of this receptor is mediated by G proteins which activate adenylyl cyclase. This Canis lupus familiaris (Dog) protein is Adenosine receptor A2a (ADORA2A).